Here is a 190-residue protein sequence, read N- to C-terminus: MRVIGTVGMPGSGKSEAATVAANAGIPVLVMGDVIRQECRDRGLDPAQHHGRIAQALRDEHGPGAIAHQSLPIIEDHLTDATTVLVDGIRSDVEVTTFRDAFGDDFTLVHVSAPRELRKARIEDRDRPGDTDGEPLDAREDRERGFGMDDAIDLADVRIENTDSLDAFHDAVRDLLAADTPHTEVPDNHD.

Residue 8 to 15 participates in ATP binding; that stretch reads GMPGSGKS. The segment at 120 to 144 is disordered; it reads ARIEDRDRPGDTDGEPLDAREDRER.

It belongs to the UPF0200 family.

This Halobacterium salinarum (strain ATCC 29341 / DSM 671 / R1) protein is UPF0200 protein OE_4442F.